The following is a 575-amino-acid chain: Proline--tRNA ligase (575 aa).

Belongs to the class-II aminoacyl-tRNA synthetase family. ProS type 1 subfamily. In terms of assembly, homodimer.

The protein localises to the cytoplasm. The catalysed reaction is tRNA(Pro) + L-proline + ATP = L-prolyl-tRNA(Pro) + AMP + diphosphate. Catalyzes the attachment of proline to tRNA(Pro) in a two-step reaction: proline is first activated by ATP to form Pro-AMP and then transferred to the acceptor end of tRNA(Pro). As ProRS can inadvertently accommodate and process non-cognate amino acids such as alanine and cysteine, to avoid such errors it has two additional distinct editing activities against alanine. One activity is designated as 'pretransfer' editing and involves the tRNA(Pro)-independent hydrolysis of activated Ala-AMP. The other activity is designated 'posttransfer' editing and involves deacylation of mischarged Ala-tRNA(Pro). The misacylated Cys-tRNA(Pro) is not edited by ProRS. The sequence is that of Proline--tRNA ligase from Desulfitobacterium hafniense (strain DSM 10664 / DCB-2).